We begin with the raw amino-acid sequence, 430 residues long: Transcription factor iws-1 (430 aa).

Over residues 1–14 (MSDAASPAGSPAAE) the composition is skewed to low complexity. The interval 1 to 153 (MSDAASPAGS…EENLTPDERR (153 aa)) is disordered. Residues 15–33 (PTEHRDEDQVNETHQDDGS) are compositionally biased toward basic and acidic residues. A compositionally biased stretch (acidic residues) spans 52–63 (VLSEIDENEFGD). Positions 95-104 (KEGRRPKKRS) are enriched in basic residues. The segment covering 124 to 137 (VRAEGERRARKEVE) has biased composition (basic and acidic residues). The region spanning 244-321 (QSVRYFLEPL…GEWSRLILKR (78 aa)) is the TFIIS N-terminal domain. Residues 402–430 (GQAPTDHRPIGHSGHEAFRRMTQKGKGKR) are disordered. The segment covering 406–420 (TDHRPIGHSGHEAFR) has biased composition (basic and acidic residues).

The protein belongs to the IWS1 family.

It localises to the nucleus. Its function is as follows. Transcription factor involved in RNA polymerase II transcription regulation. May function in both SPT15/TBP post-recruitment and recruitment steps of transcription. The chain is Transcription factor iws-1 (iws-1) from Neurospora crassa (strain ATCC 24698 / 74-OR23-1A / CBS 708.71 / DSM 1257 / FGSC 987).